We begin with the raw amino-acid sequence, 287 residues long: Phosphatidylserine decarboxylase proenzyme (287 aa).

Active-site charge relay system; for autoendoproteolytic cleavage activity residues include aspartate 90, histidine 147, and serine 253. The active-site Schiff-base intermediate with substrate; via pyruvic acid; for decarboxylase activity is serine 253. The residue at position 253 (serine 253) is a Pyruvic acid (Ser); by autocatalysis.

Belongs to the phosphatidylserine decarboxylase family. PSD-B subfamily. Prokaryotic type I sub-subfamily. Heterodimer of a large membrane-associated beta subunit and a small pyruvoyl-containing alpha subunit. Pyruvate is required as a cofactor. In terms of processing, is synthesized initially as an inactive proenzyme. Formation of the active enzyme involves a self-maturation process in which the active site pyruvoyl group is generated from an internal serine residue via an autocatalytic post-translational modification. Two non-identical subunits are generated from the proenzyme in this reaction, and the pyruvate is formed at the N-terminus of the alpha chain, which is derived from the carboxyl end of the proenzyme. The autoendoproteolytic cleavage occurs by a canonical serine protease mechanism, in which the side chain hydroxyl group of the serine supplies its oxygen atom to form the C-terminus of the beta chain, while the remainder of the serine residue undergoes an oxidative deamination to produce ammonia and the pyruvoyl prosthetic group on the alpha chain. During this reaction, the Ser that is part of the protease active site of the proenzyme becomes the pyruvoyl prosthetic group, which constitutes an essential element of the active site of the mature decarboxylase.

The protein resides in the cell membrane. It carries out the reaction a 1,2-diacyl-sn-glycero-3-phospho-L-serine + H(+) = a 1,2-diacyl-sn-glycero-3-phosphoethanolamine + CO2. Its pathway is phospholipid metabolism; phosphatidylethanolamine biosynthesis; phosphatidylethanolamine from CDP-diacylglycerol: step 2/2. Catalyzes the formation of phosphatidylethanolamine (PtdEtn) from phosphatidylserine (PtdSer). The sequence is that of Phosphatidylserine decarboxylase proenzyme from Aliivibrio fischeri (strain MJ11) (Vibrio fischeri).